A 519-amino-acid polypeptide reads, in one-letter code: Cytochrome P450 52E2 (519 aa).

The next 2 helical transmembrane spans lie at 10-30 (MLGGISLSFLLASQAIYFYFI) and 44-64 (PIFFSFPLGIPDLIRLVNAWF). C461 serves as a coordination point for heme.

It belongs to the cytochrome P450 family. Requires heme as cofactor.

Its subcellular location is the membrane. In terms of biological role, together with an NADPH cytochrome P450 the enzyme system catalyzes the terminal hydroxylation as the first step in the assimilation of alkanes and fatty acids. In Candida apicola (Yeast), this protein is Cytochrome P450 52E2 (CYP52E2).